Reading from the N-terminus, the 363-residue chain is Inositol-3-phosphate synthase (363 aa).

Residue K65 forms an Isoglutamyl lysine isopeptide (Lys-Gln) (interchain with Q-Cter in protein Pup) linkage. NAD(+)-binding residues include D70, A129, Y149, S192, D227, and K240.

The protein belongs to the myo-inositol 1-phosphate synthase family. It depends on NAD(+) as a cofactor. Pupylated at Lys-65 by the prokaryotic ubiquitin-like protein Pup, which leads to its degradation by the proteasome.

It carries out the reaction D-glucose 6-phosphate = 1D-myo-inositol 3-phosphate. In terms of biological role, key enzyme in myo-inositol biosynthesis pathway that catalyzes the conversion of glucose 6-phosphate to 1D-myo-inositol 3-phosphate in a NAD-dependent manner. The chain is Inositol-3-phosphate synthase (ino1) from Mycolicibacterium smegmatis (strain ATCC 700084 / mc(2)155) (Mycobacterium smegmatis).